A 628-amino-acid polypeptide reads, in one-letter code: 1-deoxy-D-xylulose-5-phosphate synthase (628 aa).

Thiamine diphosphate-binding positions include His72 and 113–115 (GHA). Asp144 serves as a coordination point for Mg(2+). Thiamine diphosphate contacts are provided by residues 145–146 (GA), Asn174, Tyr287, and Glu370. Asn174 serves as a coordination point for Mg(2+).

This sequence belongs to the transketolase family. DXPS subfamily. Homodimer. Requires Mg(2+) as cofactor. Thiamine diphosphate serves as cofactor.

It catalyses the reaction D-glyceraldehyde 3-phosphate + pyruvate + H(+) = 1-deoxy-D-xylulose 5-phosphate + CO2. Its pathway is metabolic intermediate biosynthesis; 1-deoxy-D-xylulose 5-phosphate biosynthesis; 1-deoxy-D-xylulose 5-phosphate from D-glyceraldehyde 3-phosphate and pyruvate: step 1/1. Functionally, catalyzes the acyloin condensation reaction between C atoms 2 and 3 of pyruvate and glyceraldehyde 3-phosphate to yield 1-deoxy-D-xylulose-5-phosphate (DXP). This is 1-deoxy-D-xylulose-5-phosphate synthase from Prochlorococcus marinus (strain NATL2A).